Consider the following 390-residue polypeptide: Succinate--CoA ligase [ADP-forming] subunit beta (390 aa).

Residues 9–244 (KSLFQQYGIP…ISQEDVREAK (236 aa)) enclose the ATP-grasp domain. ATP is bound by residues lysine 46, glutamate 99, leucine 102, and glutamate 107. Mg(2+) contacts are provided by asparagine 199 and aspartate 213. Substrate contacts are provided by residues asparagine 264 and 321-323 (GIV).

This sequence belongs to the succinate/malate CoA ligase beta subunit family. Heterotetramer of two alpha and two beta subunits. Mg(2+) serves as cofactor.

The enzyme catalyses succinate + ATP + CoA = succinyl-CoA + ADP + phosphate. It catalyses the reaction GTP + succinate + CoA = succinyl-CoA + GDP + phosphate. Its pathway is carbohydrate metabolism; tricarboxylic acid cycle; succinate from succinyl-CoA (ligase route): step 1/1. In terms of biological role, succinyl-CoA synthetase functions in the citric acid cycle (TCA), coupling the hydrolysis of succinyl-CoA to the synthesis of either ATP or GTP and thus represents the only step of substrate-level phosphorylation in the TCA. The beta subunit provides nucleotide specificity of the enzyme and binds the substrate succinate, while the binding sites for coenzyme A and phosphate are found in the alpha subunit. The sequence is that of Succinate--CoA ligase [ADP-forming] subunit beta from Hydrogenovibrio crunogenus (strain DSM 25203 / XCL-2) (Thiomicrospira crunogena).